The primary structure comprises 505 residues: MASIDFRNKINWHRRYRSPQGVKTEHEILRIFESDRGRIINSPAIRRLQQKTQVFPLERNAAVRTRLTHSMEVQQVGRYIAKEILSRLKEQNRLEEYGLDALTGPFESIVEMACLMHDIGNPPFGHFGEAAINDWFRQRLHPEDAESQPLTHDRCVVSSLRLQEGEENLNDIRRKVRQDICHFEGNAQGIRLVHTLMRMNLTWAQVGGILKYTRPAWWRGPVPDSHRYLMKKPGYYLSEEKYIARLRKELQLAPYSRFPLTWIMEAADDISYCVADLEDAVEKRIFSVEQLYHHLYHAWGHHEKDSLFELVVGNAWEKSRANTLSRSTEDQFFMYLRVNTLNKLVPYAAQRFIDNLPQIFAGTFNQALLEDASGFSRLLGLYKNVAVEHVFSHPDVEQLELQGYRVISGLLDIYQPLLSLSLNDFRELVEKERLKRFPIESRLFQKLSTRHRLAYVEVVSKLPTDSAEYPVLEYYYRCRLIQDYISGMTDLYAWDEYRRLMAVEQ.

An HD domain is found at 66–273 (RLTHSMEVQQ…MEAADDISYC (208 aa)).

The protein belongs to the dGTPase family. Type 1 subfamily. As to quaternary structure, homotetramer. Mg(2+) is required as a cofactor.

It carries out the reaction dGTP + H2O = 2'-deoxyguanosine + triphosphate + H(+). Functionally, dGTPase preferentially hydrolyzes dGTP over the other canonical NTPs. This chain is Deoxyguanosinetriphosphate triphosphohydrolase, found in Salmonella enteritidis PT4 (strain P125109).